A 72-amino-acid chain; its full sequence is Probable protein transport protein Sec61 subunit gamma (72 aa).

Topologically, residues 1–40 (MSQKLQKPSFLSEYLRSIRLFSKKCVRPSGKELSMSIKRH) are cytoplasmic. Residues 41 to 61 (AIGIGFLGILGYAIKLIHIPI) form a helical membrane-spanning segment. Residues 62-72 (NNIIVSSPGKE) are Extracellular-facing.

The protein belongs to the SecE/SEC61-gamma family. As to quaternary structure, heterotrimeric complex composed of SEC61-alpha, SEC61-beta and SEC61-gamma.

Its subcellular location is the endoplasmic reticulum membrane. Functionally, necessary for protein translocation in the endoplasmic reticulum. This is Probable protein transport protein Sec61 subunit gamma from Encephalitozoon cuniculi (strain GB-M1) (Microsporidian parasite).